Here is a 779-residue protein sequence, read N- to C-terminus: Glucan endo-1,3-beta-D-glucosidase 2 (779 aa).

The interval 1–71 is disordered; the sequence is MCYSRQAIPP…SNPLADSQVN (71 aa). Over residues 57–71 the composition is skewed to polar residues; the sequence is RTPSSSNPLADSQVN. Positions 73–309 are beta-sandwich subdomain; it reads DNIFQSPVLS…NGLICQLSAD (237 aa). The GH81 domain maps to 73-779; it reads DNIFQSPVLS…WSLAYSGAFS (707 aa). An alpha/beta subdomain region spans residues 309 to 400; it reads DSVPSIDMAA…LTNSFDMQVQ (92 aa). Positions 375–779 are sufficient for catalytic activity; that stretch reads IASSLDSTVK…WSLAYSGAFS (405 aa). Residues 415 to 779 are (alpha/beta)6 barrel subdomain; the sequence is NKKADYSQEK…WSLAYSGAFS (365 aa). Residue aspartate 526 is part of the active site. (1,3-beta-D-glucosyl)n-binding residues include histidine 530, aspartate 607, glutamate 609, and glutamate 613. Active-site residues include glutamate 609 and glutamate 613. Residues 678-680 form a may provide specificity for triple-helical beta-glucan region; the sequence is KID. Tyrosine 691 lines the (1,3-beta-D-glucosyl)n pocket.

The protein belongs to the glycosyl hydrolase 81 family.

It localises to the cytoplasm. The enzyme catalyses Hydrolysis of (1-&gt;3)-beta-D-glucosidic linkages in (1-&gt;3)-beta-D-glucans.. With respect to regulation, inhibited by mercury ions. Functionally, cleaves internal linkages in 1,3-beta-glucan. This Saccharomyces cerevisiae (strain ATCC 204508 / S288c) (Baker's yeast) protein is Glucan endo-1,3-beta-D-glucosidase 2.